Consider the following 241-residue polypeptide: Triosephosphate isomerase (241 aa).

N9–K11 serves as a coordination point for substrate. H96 acts as the Electrophile in catalysis. Catalysis depends on E165, which acts as the Proton acceptor. Residues G171, S204, and G225–G226 each bind substrate.

Belongs to the triosephosphate isomerase family. Homodimer.

It localises to the cytoplasm. It carries out the reaction D-glyceraldehyde 3-phosphate = dihydroxyacetone phosphate. Its pathway is carbohydrate biosynthesis; gluconeogenesis. It functions in the pathway carbohydrate degradation; glycolysis; D-glyceraldehyde 3-phosphate from glycerone phosphate: step 1/1. Functionally, involved in the gluconeogenesis. Catalyzes stereospecifically the conversion of dihydroxyacetone phosphate (DHAP) to D-glyceraldehyde-3-phosphate (G3P). The polypeptide is Triosephosphate isomerase (Prochlorococcus marinus (strain MIT 9301)).